The sequence spans 360 residues: uncharacterized protein (360 aa).

A THUMP domain is found at 45-148; it reads EDIEDKILQI…KNKTYVSITP (104 aa).

This is an uncharacterized protein from Methanocaldococcus jannaschii (strain ATCC 43067 / DSM 2661 / JAL-1 / JCM 10045 / NBRC 100440) (Methanococcus jannaschii).